Consider the following 138-residue polypeptide: Nucleoside diphosphate kinase (138 aa).

6 residues coordinate ATP: Lys9, Phe57, Arg85, Thr91, Arg102, and Asn112. His115 functions as the Pros-phosphohistidine intermediate in the catalytic mechanism.

The protein belongs to the NDK family. In terms of assembly, homotetramer. The cofactor is Mg(2+).

It localises to the cytoplasm. The enzyme catalyses a 2'-deoxyribonucleoside 5'-diphosphate + ATP = a 2'-deoxyribonucleoside 5'-triphosphate + ADP. It carries out the reaction a ribonucleoside 5'-diphosphate + ATP = a ribonucleoside 5'-triphosphate + ADP. In terms of biological role, major role in the synthesis of nucleoside triphosphates other than ATP. The ATP gamma phosphate is transferred to the NDP beta phosphate via a ping-pong mechanism, using a phosphorylated active-site intermediate. The sequence is that of Nucleoside diphosphate kinase from Deinococcus radiodurans (strain ATCC 13939 / DSM 20539 / JCM 16871 / CCUG 27074 / LMG 4051 / NBRC 15346 / NCIMB 9279 / VKM B-1422 / R1).